The primary structure comprises 684 residues: Histamine oxidase (684 aa).

Tyrosine 316–aspartate 327 provides a ligand contact to substrate. Catalysis depends on aspartate 318, which acts as the Proton acceptor. Cysteine 337 and cysteine 363 are oxidised to a cystine. Position 399–404 (valine 399–tyrosine 404) interacts with substrate. Residue tyrosine 402 is the Schiff-base intermediate with substrate; via topaquinone of the active site. Tyrosine 402 is modified (2',4',5'-topaquinone). Residues histidine 451 and histidine 453 each contribute to the Cu cation site. Residues aspartate 460, glutamate 500, tyrosine 590, and aspartate 601 each coordinate Ca(2+). Aspartate 460 is a binding site for Mn(2+). Mn(2+) is bound at residue aspartate 601. Histidine 612 serves as a coordination point for Cu cation. A disordered region spans residues serine 647–histidine 684. Residues aspartate 675–histidine 684 are compositionally biased toward gly residues.

Belongs to the copper/topaquinone oxidase family. Homodimer. Requires Cu cation as cofactor. Zn(2+) is required as a cofactor. The cofactor is Ca(2+). L-topaquinone serves as cofactor. It depends on Mn(2+) as a cofactor. Post-translationally, topaquinone (TPQ) is generated by copper-dependent autoxidation of a specific tyrosyl residue.

It localises to the cytoplasm. It carries out the reaction a primary methyl amine + O2 + H2O = an aldehyde + H2O2 + NH4(+). The catalysed reaction is histamine + O2 + H2O = imidazole-4-acetaldehyde + H2O2 + NH4(+). Its function is as follows. Oxidizes histamine. Other amines including phenethylamine, tyramine, tryptamine, putrescine, and benzylamine also serve as substrate. The sequence is that of Histamine oxidase from Arthrobacter globiformis.